Reading from the N-terminus, the 439-residue chain is tRNA modification GTPase MnmE (439 aa).

Residues R26, E88, and R127 each coordinate (6S)-5-formyl-5,6,7,8-tetrahydrofolate. The TrmE-type G domain occupies 220 to 367 (GARLALIGRP…LRDAIHTALI (148 aa)). Position 230 (N230) interacts with K(+). Residues 230-235 (NAGKSS), 249-255 (TPIPGTT), and 274-277 (DTAG) each bind GTP. S234 contacts Mg(2+). K(+) is bound by residues T249, I251, and T254. T255 contributes to the Mg(2+) binding site. (6S)-5-formyl-5,6,7,8-tetrahydrofolate is bound at residue K439.

It belongs to the TRAFAC class TrmE-Era-EngA-EngB-Septin-like GTPase superfamily. TrmE GTPase family. In terms of assembly, homodimer. Heterotetramer of two MnmE and two MnmG subunits. It depends on K(+) as a cofactor.

It is found in the cytoplasm. Its function is as follows. Exhibits a very high intrinsic GTPase hydrolysis rate. Involved in the addition of a carboxymethylaminomethyl (cmnm) group at the wobble position (U34) of certain tRNAs, forming tRNA-cmnm(5)s(2)U34. This is tRNA modification GTPase MnmE from Deinococcus geothermalis (strain DSM 11300 / CIP 105573 / AG-3a).